The chain runs to 218 residues: Pyridoxine/pyridoxamine 5'-phosphate oxidase (218 aa).

Residues 14–17 (RREY) and Lys72 contribute to the substrate site. FMN-binding positions include 67–72 (RIVLLK), 82–83 (YT), Arg88, Lys89, and Gln111. Substrate contacts are provided by Tyr129, Arg133, and Ser137. FMN is bound by residues 146–147 (QS) and Trp191. 197–199 (RLH) provides a ligand contact to substrate. Arg201 serves as a coordination point for FMN.

The protein belongs to the pyridoxamine 5'-phosphate oxidase family. Homodimer. It depends on FMN as a cofactor.

The enzyme catalyses pyridoxamine 5'-phosphate + O2 + H2O = pyridoxal 5'-phosphate + H2O2 + NH4(+). It catalyses the reaction pyridoxine 5'-phosphate + O2 = pyridoxal 5'-phosphate + H2O2. It functions in the pathway cofactor metabolism; pyridoxal 5'-phosphate salvage; pyridoxal 5'-phosphate from pyridoxamine 5'-phosphate: step 1/1. The protein operates within cofactor metabolism; pyridoxal 5'-phosphate salvage; pyridoxal 5'-phosphate from pyridoxine 5'-phosphate: step 1/1. Its function is as follows. Catalyzes the oxidation of either pyridoxine 5'-phosphate (PNP) or pyridoxamine 5'-phosphate (PMP) into pyridoxal 5'-phosphate (PLP). This chain is Pyridoxine/pyridoxamine 5'-phosphate oxidase, found in Escherichia coli O139:H28 (strain E24377A / ETEC).